The chain runs to 570 residues: Sulfite reductase [NADPH] hemoprotein beta-component (570 aa).

The [4Fe-4S] cluster site is built by Cys-434, Cys-440, Cys-479, and Cys-483. Cys-483 is a siroheme binding site.

Belongs to the nitrite and sulfite reductase 4Fe-4S domain family. As to quaternary structure, alpha(8)-beta(8). The alpha component is a flavoprotein, the beta component is a hemoprotein. It depends on siroheme as a cofactor. Requires [4Fe-4S] cluster as cofactor.

The catalysed reaction is hydrogen sulfide + 3 NADP(+) + 3 H2O = sulfite + 3 NADPH + 4 H(+). It functions in the pathway sulfur metabolism; hydrogen sulfide biosynthesis; hydrogen sulfide from sulfite (NADPH route): step 1/1. Its function is as follows. Component of the sulfite reductase complex that catalyzes the 6-electron reduction of sulfite to sulfide. This is one of several activities required for the biosynthesis of L-cysteine from sulfate. This is Sulfite reductase [NADPH] hemoprotein beta-component from Klebsiella pneumoniae subsp. pneumoniae (strain ATCC 700721 / MGH 78578).